A 36-amino-acid chain; its full sequence is Omega-agatoxin-Aa1b (36 aa).

The protein belongs to the neurotoxin 04 (omega-agtx) family. 01 (type I omega-agtx) subfamily. Expressed by the venom gland.

The protein localises to the secreted. Functionally, omega-agatoxin are antagonist of voltage-gated calcium channels. They block insect neuromuscular transmission presynaptically. This toxin is a blocker of L-type calcium channels (Cav/CACNA1). The protein is Omega-agatoxin-Aa1b of Agelenopsis aperta (North American funnel-web spider).